A 330-amino-acid chain; its full sequence is MATKWGICSTGRISNDFVVALSTLPAVDHQVVAVAARDLEKAKNFAQIHNIPKAYGSYEELAKDPDIDVIYVGAIHPVHRDVVLMCLQNGKNVLCEKPLAMNSAQVRELIAAARKFNVFLMEAFWSRFFPVYEEIRTLLSQKAIGDVKFIRAEFGTPIYTVPRAVEKELGGGALLDIGCYCVQFVTMVFNGEKPESVTARGFLHETGVDETISIILEYSGKRQAILSSTIMAALPNQTAICGTKGIIQIPSFMWSPTSVIVNGKETKFDVPHTTEPMNFSNGTGMSYEAEHVRQCLLKGLKESPIMSLADSEMIATIMDEALEQLGVMYP.

It belongs to the Gfo/Idh/MocA family. Homodimer.

The catalysed reaction is (1R,2R)-1,2-dihydrobenzene-1,2-diol + NADP(+) = catechol + NADPH + H(+). The enzyme catalyses D-xylose + NADP(+) = D-xylono-1,5-lactone + NADPH + H(+). In Xenopus laevis (African clawed frog), this protein is Trans-1,2-dihydrobenzene-1,2-diol dehydrogenase (dhdh).